Here is a 498-residue protein sequence, read N- to C-terminus: ATP synthase subunit beta, chloroplastic (498 aa).

172–179 (GGAGVGKT) serves as a coordination point for ATP.

This sequence belongs to the ATPase alpha/beta chains family. As to quaternary structure, F-type ATPases have 2 components, CF(1) - the catalytic core - and CF(0) - the membrane proton channel. CF(1) has five subunits: alpha(3), beta(3), gamma(1), delta(1), epsilon(1). CF(0) has four main subunits: a(1), b(1), b'(1) and c(9-12).

The protein localises to the plastid. It localises to the chloroplast thylakoid membrane. The enzyme catalyses ATP + H2O + 4 H(+)(in) = ADP + phosphate + 5 H(+)(out). Produces ATP from ADP in the presence of a proton gradient across the membrane. The catalytic sites are hosted primarily by the beta subunits. This Populus alba (White poplar) protein is ATP synthase subunit beta, chloroplastic.